The following is a 186-amino-acid chain: Ribosome-recycling factor (186 aa).

Belongs to the RRF family.

The protein resides in the cytoplasm. Functionally, responsible for the release of ribosomes from messenger RNA at the termination of protein biosynthesis. May increase the efficiency of translation by recycling ribosomes from one round of translation to another. This is Ribosome-recycling factor from Rickettsia conorii (strain ATCC VR-613 / Malish 7).